The chain runs to 96 residues: Large ribosomal subunit protein bL27 (96 aa).

The propeptide occupies 1–9; sequence MLRLDLQFF. The disordered stretch occupies residues 14-35; sequence GVGSTKNGRDSQSKRLGAKRAD.

The protein belongs to the bacterial ribosomal protein bL27 family. In terms of processing, the N-terminus is cleaved by ribosomal processing cysteine protease Prp.

This is Large ribosomal subunit protein bL27 from Bacillus cytotoxicus (strain DSM 22905 / CIP 110041 / 391-98 / NVH 391-98).